The sequence spans 282 residues: Pantothenate synthetase (282 aa).

Residue 26-33 (MGNLHEGH) participates in ATP binding. The active-site Proton donor is histidine 33. Glutamine 57 provides a ligand contact to (R)-pantoate. Glutamine 57 is a beta-alanine binding site. 148-151 (GKKD) contributes to the ATP binding site. (R)-pantoate is bound at residue glutamine 154. 185 to 188 (LSSR) provides a ligand contact to ATP.

It belongs to the pantothenate synthetase family. In terms of assembly, homodimer.

The protein localises to the cytoplasm. It carries out the reaction (R)-pantoate + beta-alanine + ATP = (R)-pantothenate + AMP + diphosphate + H(+). It participates in cofactor biosynthesis; (R)-pantothenate biosynthesis; (R)-pantothenate from (R)-pantoate and beta-alanine: step 1/1. Functionally, catalyzes the condensation of pantoate with beta-alanine in an ATP-dependent reaction via a pantoyl-adenylate intermediate. The protein is Pantothenate synthetase of Paracidovorax citrulli (strain AAC00-1) (Acidovorax citrulli).